Here is a 244-residue protein sequence, read N- to C-terminus: Nonsense-mediated decay protein 4 (244 aa).

It localises to the cytoplasm. Its function is as follows. Involved in nonsense-mediated decay of mRNAs containing premature stop codons. In Kluyveromyces lactis (strain ATCC 8585 / CBS 2359 / DSM 70799 / NBRC 1267 / NRRL Y-1140 / WM37) (Yeast), this protein is Nonsense-mediated decay protein 4 (NMD4).